The chain runs to 467 residues: Gustatory and odorant receptor 22 (467 aa).

At Met1–Ser106 the chain is on the cytoplasmic side. The chain crosses the membrane as a helical span at residues Lys107–Ala127. Residues Arg128 to Glu144 are Extracellular-facing. Residues Val145 to Ser165 traverse the membrane as a helical segment. The Cytoplasmic portion of the chain corresponds to Trp166–Lys198. Residues Leu199 to Leu219 form a helical membrane-spanning segment. The Extracellular segment spans residues Ser220–His238. A helical transmembrane segment spans residues Ile239–Thr259. The Cytoplasmic portion of the chain corresponds to Ala260–Asn304. The helical transmembrane segment at Met305 to Leu325 threads the bilayer. The Extracellular portion of the chain corresponds to Ser326–Glu337. A helical membrane pass occupies residues Val338–Ala358. Over His359–Gly414 the chain is Cytoplasmic. Residues Leu415 to Leu435 form a helical membrane-spanning segment. Over Thr436 to Thr467 the chain is Extracellular. Asn453 is a glycosylation site (N-linked (GlcNAc...) asparagine).

It belongs to the insect chemoreceptor superfamily. Gustatory receptor (GR) family. Gr21a subfamily. In terms of tissue distribution, carbon dioxide-responsive neurons coexpress GPRgr22 and GPRgr24 in the maxillary palp at both larval and adult life stages.

The protein resides in the cell membrane. In terms of biological role, gustatory receptor which mediates acceptance or avoidance behavior, depending on its substrates. GPRgr22 and GPRgr24 together are sufficient for olfactory carbon dioxide-chemosensation. The protein is Gustatory and odorant receptor 22 of Anopheles gambiae (African malaria mosquito).